A 264-amino-acid polypeptide reads, in one-letter code: Glutamate racemase (264 aa).

Substrate-binding positions include 12-13 (DS) and 44-45 (YG). Residue Cys76 is the Proton donor/acceptor of the active site. 77 to 78 (NT) serves as a coordination point for substrate. Cys186 serves as the catalytic Proton donor/acceptor. Substrate is bound at residue 187-188 (TH).

It belongs to the aspartate/glutamate racemases family.

The catalysed reaction is L-glutamate = D-glutamate. It functions in the pathway cell wall biogenesis; peptidoglycan biosynthesis. Its function is as follows. Provides the (R)-glutamate required for cell wall biosynthesis. The polypeptide is Glutamate racemase (Fusobacterium nucleatum subsp. nucleatum (strain ATCC 25586 / DSM 15643 / BCRC 10681 / CIP 101130 / JCM 8532 / KCTC 2640 / LMG 13131 / VPI 4355)).